Consider the following 301-residue polypeptide: tRNA uridine(34) hydroxylase (301 aa).

The 95-residue stretch at 121–215 folds into the Rhodanese domain; the sequence is RSDDVVLIDT…YLEEVPAENS (95 aa). The Cysteine persulfide intermediate role is filled by Cys175.

This sequence belongs to the TrhO family.

It carries out the reaction uridine(34) in tRNA + AH2 + O2 = 5-hydroxyuridine(34) in tRNA + A + H2O. Catalyzes oxygen-dependent 5-hydroxyuridine (ho5U) modification at position 34 in tRNAs. In Ruegeria pomeroyi (strain ATCC 700808 / DSM 15171 / DSS-3) (Silicibacter pomeroyi), this protein is tRNA uridine(34) hydroxylase.